A 312-amino-acid polypeptide reads, in one-letter code: Calcium-independent mitochondrial carrier protein SCaMC-3L (312 aa).

Solcar repeat units follow at residues 27–113, 121–206, and 217–304; these read GTLW…SKNF, QLFQ…LQCL, and PSGL…MKKT. Transmembrane regions (helical) follow at residues 33–50, 88–107, 131–144, 182–200, 219–243, and 279–298; these read LLSG…TAPL, GNGI…FSVC, SLAV…INPM, YLPN…LAVY, GLVS…LTLV, and GMTP…YLVY.

Belongs to the mitochondrial carrier (TC 2.A.29) family. Mainly expressed in testis and at lesser levels in brain.

Its subcellular location is the mitochondrion inner membrane. It carries out the reaction Mg(2+)(out) + phosphate(in) + ATP(out) = Mg(2+)(in) + phosphate(out) + ATP(in). The catalysed reaction is ADP(out) + phosphate(in) + H(+)(out) = ADP(in) + phosphate(out) + H(+)(in). In terms of biological role, calcium-independent ATP-Mg/Pi exchanger that catalyzes the electroneutral exchange of Mg-ATP or free ADP against an hydrogenphosphate and participates in the net transport of adenine nucleotides across the mitochondria inner membrane. The sequence is that of Calcium-independent mitochondrial carrier protein SCaMC-3L from Mus musculus (Mouse).